Here is a 237-residue protein sequence, read N- to C-terminus: Ribosomal RNA small subunit methyltransferase G (237 aa).

Positions 1-25 (MASRHSPQTAAQPDAADKAQALRLT) are disordered. Low complexity predominate over residues 7 to 21 (PQTAAQPDAADKAQA). S-adenosyl-L-methionine-binding residues include Gly85, Phe90, and Arg155.

This sequence belongs to the methyltransferase superfamily. RNA methyltransferase RsmG family.

The protein resides in the cytoplasm. The enzyme catalyses guanosine(527) in 16S rRNA + S-adenosyl-L-methionine = N(7)-methylguanosine(527) in 16S rRNA + S-adenosyl-L-homocysteine. Functionally, specifically methylates the N7 position of guanine in position 527 of 16S rRNA. This chain is Ribosomal RNA small subunit methyltransferase G, found in Rhodopseudomonas palustris (strain HaA2).